The chain runs to 294 residues: ATP phosphoribosyltransferase (294 aa).

This sequence belongs to the ATP phosphoribosyltransferase family. Long subfamily. Mg(2+) is required as a cofactor.

It is found in the cytoplasm. It carries out the reaction 1-(5-phospho-beta-D-ribosyl)-ATP + diphosphate = 5-phospho-alpha-D-ribose 1-diphosphate + ATP. It functions in the pathway amino-acid biosynthesis; L-histidine biosynthesis; L-histidine from 5-phospho-alpha-D-ribose 1-diphosphate: step 1/9. Feedback inhibited by histidine. Its function is as follows. Catalyzes the condensation of ATP and 5-phosphoribose 1-diphosphate to form N'-(5'-phosphoribosyl)-ATP (PR-ATP). Has a crucial role in the pathway because the rate of histidine biosynthesis seems to be controlled primarily by regulation of HisG enzymatic activity. The protein is ATP phosphoribosyltransferase of Prosthecochloris aestuarii (strain DSM 271 / SK 413).